The chain runs to 431 residues: STE20-related kinase adapter protein alpha (431 aa).

A phosphoserine mark is found at Ser-2 and Ser-46. A Protein kinase domain is found at Tyr-69–Phe-379. Residues Leu-310–Thr-347 are disordered. The segment covering Met-312–Ser-339 has biased composition (polar residues). 2 positions are modified to phosphothreonine; by LKB1: Thr-329 and Thr-419.

The protein belongs to the protein kinase superfamily. STE Ser/Thr protein kinase family. STE20 subfamily. In terms of assembly, component of a trimeric complex composed of STK11/LKB1, STRAD (STRADA or STRADB) and CAB39/MO25 (CAB39/MO25alpha or CAB39L/MO25beta): the complex tethers STK11/LKB1 in the cytoplasm and stimulates its catalytic activity.

The protein localises to the nucleus. It localises to the cytoplasm. Functionally, pseudokinase which, in complex with CAB39/MO25 (CAB39/MO25alpha or CAB39L/MO25beta), binds to and activates STK11/LKB1. Adopts a closed conformation typical of active protein kinases and binds STK11/LKB1 as a pseudosubstrate, promoting conformational change of STK11/LKB1 in an active conformation. This Homo sapiens (Human) protein is STE20-related kinase adapter protein alpha (STRADA).